The primary structure comprises 313 residues: 2-phosphoglycerate kinase (313 aa).

Residues Ser-8–Ser-95 form the ATP-cone domain.

This sequence belongs to the 2-phosphoglycerate kinase family. The cofactor is a divalent metal cation.

It carries out the reaction (2R)-2-phosphoglycerate + ATP = (2R)-2,3-bisphosphoglycerate + ADP + H(+). It participates in thermoadapter biosynthesis; cyclic 2,3-diphosphoglycerate biosynthesis; cyclic 2,3-diphosphoglycerate from 2-phospho-D-glycerate: step 1/2. Its function is as follows. Catalyzes the phosphorylation of 2-phosphoglycerate to 2,3-diphosphoglycerate. Involved in the biosynthesis of cyclic 2,3-bisphosphoglycerate, a thermoprotectant. The sequence is that of 2-phosphoglycerate kinase from Methanococcus maripaludis (strain C5 / ATCC BAA-1333).